Reading from the N-terminus, the 122-residue chain is RING-box protein 1B (122 aa).

Residues 1 to 23 show a composition bias toward acidic residues; the sequence is MAEEIEVEETEDFHDMDFNDEEP. Positions 1–28 are disordered; sequence MAEEIEVEETEDFHDMDFNDEEPSCSGG. Residues Cys-57, Cys-60, Cys-68, Cys-71, Cys-82, Cys-89, His-91, His-94, His-96, Cys-108, and Asp-111 each contribute to the Zn(2+) site. An RING-type zinc finger spans residues 57–112; sequence CAICRNHIMNLCIECQADPNANQDECTVAWGECNHAFHYHCIARWLKTRLVCPLDN.

Belongs to the RING-box family. In terms of assembly, part of a SCF complex consisting of Skpa (SKP1), Cul1, Roc1B and a F-box protein. As to expression, highly expressed in early embryos, and in pupae. Widely expressed in adult males, while it is weakly expressed in adult females.

It localises to the cytoplasm. It is found in the nucleus. Its pathway is protein modification; protein ubiquitination. Functionally, component of the SCF (SKP1-CUL1-F-box protein) E3 ubiquitin ligase complex, which mediates the ubiquitination and subsequent proteasomal degradation of target proteins. Through the RING-type zinc finger, seems to recruit the E2 ubiquitination enzyme to the complex and brings it into close proximity to the substrate. The chain is RING-box protein 1B (Roc1b) from Drosophila melanogaster (Fruit fly).